Consider the following 321-residue polypeptide: Taste receptor type 2 member 135 (321 aa).

The Extracellular portion of the chain corresponds to 1–28 (MGPIMSTGETSTAHTVLGCQITDKTVIT). Residues 29–49 (LFVILVFSCLVAVVGNGFIII) traverse the membrane as a helical segment. Residues 50 to 75 (ALGMKWLLRRTLSAHNKLLISLAASR) are Cytoplasmic-facing. A helical membrane pass occupies residues 76–96 (FCLQCVVIGKNIYVFLNPSSF). Residues 97 to 106 (PYNPVIQLLN) are Extracellular-facing. The helical transmembrane segment at 107–127 (LMWDFLTAATIWFCSLLGFFY) threads the bilayer. The Cytoplasmic portion of the chain corresponds to 128–149 (CVKIATLTHPVFVWLKYRLPGW). A helical transmembrane segment spans residues 150–170 (VPWMLLSAVGMSSLTSILCFI). Topologically, residues 171–207 (GNHMIYQNYARRGHQPWNATGNSLRHSLEKFYFISIK) are extracellular. An N-linked (GlcNAc...) asparagine glycan is attached at Asn-188. Residues 208-228 (IIMWTVPTVIFSIFMSLLLVS) form a helical membrane-spanning segment. Residues 229 to 253 (LVRHMKKTLLALSELRDVWAQAHFK) are Cytoplasmic-facing. Residues 254 to 274 (ALLPLLSFIILFISCFLTLVL) form a helical membrane-spanning segment. Over 275–286 (SSASSTPYQEFR) the chain is Extracellular. The helical transmembrane segment at 287 to 307 (YWMWQVVIHLCTVIHPIVILL) threads the bilayer. At 308–321 (SNPVLRVVMKRGCC) the chain is on the cytoplasmic side.

The protein belongs to the G-protein coupled receptor T2R family.

The protein localises to the membrane. Putative taste receptor which may play a role in the perception of bitterness. In Rattus norvegicus (Rat), this protein is Taste receptor type 2 member 135.